The sequence spans 465 residues: UDP-N-acetylmuramate--L-alanine ligase (465 aa).

114–120 (GTHGKTT) provides a ligand contact to ATP.

Belongs to the MurCDEF family.

The protein resides in the cytoplasm. It catalyses the reaction UDP-N-acetyl-alpha-D-muramate + L-alanine + ATP = UDP-N-acetyl-alpha-D-muramoyl-L-alanine + ADP + phosphate + H(+). It functions in the pathway cell wall biogenesis; peptidoglycan biosynthesis. Functionally, cell wall formation. This Chlorobium phaeobacteroides (strain BS1) protein is UDP-N-acetylmuramate--L-alanine ligase.